Reading from the N-terminus, the 128-residue chain is MITDPIADFCSAIQNAAYAKKKEIKVPYSFLKERIAQVMLHEGYLEKIEKIEVRKNIFELKVVLKEPALITKIKRISKPGLRQYVGYKEIPNILRGLGICILSTSRGIMAGHRAKRMKLGGELLLAIY.

This sequence belongs to the universal ribosomal protein uS8 family. As to quaternary structure, part of the 30S ribosomal subunit. Contacts proteins S5 and S12.

Its function is as follows. One of the primary rRNA binding proteins, it binds directly to 16S rRNA central domain where it helps coordinate assembly of the platform of the 30S subunit. This chain is Small ribosomal subunit protein uS8, found in Methylacidiphilum infernorum (isolate V4) (Methylokorus infernorum (strain V4)).